Reading from the N-terminus, the 476-residue chain is RNA-splicing ligase RtcB homolog (476 aa).

Mn(2+)-binding residues include Asp-90, Cys-93, His-198, His-230, and His-324. 197 to 201 contributes to the GMP binding site; the sequence is NHYAE. Residues 324 to 325, 373 to 376, Ser-380, 399 to 402, and Lys-475 each bind GMP; these read HN, GGTM, and HGAG. His-399 functions as the GMP-histidine intermediate in the catalytic mechanism.

The protein belongs to the RtcB family. As to quaternary structure, catalytic component of the tRNA-splicing ligase complex. The cofactor is Mn(2+).

The catalysed reaction is a 3'-end 3'-phospho-ribonucleotide-RNA + a 5'-end dephospho-ribonucleoside-RNA + GTP = a ribonucleotidyl-ribonucleotide-RNA + GMP + diphosphate. It carries out the reaction a 3'-end 2',3'-cyclophospho-ribonucleotide-RNA + a 5'-end dephospho-ribonucleoside-RNA + GTP + H2O = a ribonucleotidyl-ribonucleotide-RNA + GMP + diphosphate + H(+). Its function is as follows. Catalytic subunit of the tRNA-splicing ligase complex that acts by directly joining spliced tRNA halves to mature-sized tRNAs by incorporating the precursor-derived splice junction phosphate into the mature tRNA as a canonical 3',5'-phosphodiester. May act as an RNA ligase with broad substrate specificity, and may function toward other RNAs. The sequence is that of RNA-splicing ligase RtcB homolog from Chlamydomonas reinhardtii (Chlamydomonas smithii).